A 329-amino-acid polypeptide reads, in one-letter code: Cathepsin K (329 aa).

The signal sequence occupies residues 1 to 15 (MWGLTVLLLPVVSFA). The propeptide at 16 to 114 (LYPEEILDTQ…TLYIPDWEGR (99 aa)) is activation peptide. N-linked (GlcNAc...) asparagine glycosylation is present at Asn-103. Intrachain disulfides connect Cys-136/Cys-177, Cys-170/Cys-210, and Cys-269/Cys-318. Cys-139 is a catalytic residue. Residues His-276 and Asn-296 contribute to the active site.

It belongs to the peptidase C1 family.

Its subcellular location is the lysosome. The protein localises to the secreted. It localises to the apical cell membrane. The enzyme catalyses Broad proteolytic activity. With small-molecule substrates and inhibitors, the major determinant of specificity is P2, which is preferably Leu, Met &gt; Phe, and not Arg.. In terms of biological role, thiol protease involved in osteoclastic bone resorption and may participate partially in the disorder of bone remodeling. Displays potent endoprotease activity against fibrinogen at acid pH. May play an important role in extracellular matrix degradation. Involved in the release of thyroid hormone thyroxine (T4) by limited proteolysis of TG/thyroglobulin in the thyroid follicle lumen. In Bos taurus (Bovine), this protein is Cathepsin K (CTSK).